The chain runs to 239 residues: Prolyl hydroxylase EGLN3 (239 aa).

The segment at 62–73 is beta(2)beta(3) 'finger-like' loop; that stretch reads AGPRAGVSKRHL. The interval 88-104 is required for interaction with ADRB2; it reads CEAINFLLSLIDRLVLY. Positions 116–214 constitute a Fe2OG dioxygenase domain; that stretch reads ERSKAMVACY…RYAMTVWYFD (99 aa). 3 residues coordinate Fe cation: H135, D137, and H196. Residue R205 participates in 2-oxoglutarate binding.

Interacts with ADRB2; the interaction hydroxylates ADRB2 facilitating its ubiquitination by the VHL-E3 ligase complex. Interacts with PKM; the interaction hydroxylates PKM in hypoxia. Interacts with WDR83; the interaction leads to almost complete elimination of HIF-mediated reporter activity. Interacts with BCL2 (via its BH4 domain); the interaction disrupts the BAX-BCL4 complex inhibiting the anti-apoptotic activity of BCL2. Interacts with LIMD1, WTIP and AJUBA. It depends on Fe(2+) as a cofactor. L-ascorbate serves as cofactor. Post-translationally, ubiquitinated by SIAH1 and/or SIAH2 in response to the unfolded protein response (UPR), leading to its degradation. In terms of tissue distribution, highly expressed in cardiac and smooth muscle. Also high expression in brain, skeletal muscle and kidney. Low levels in lung.

The protein resides in the nucleus. It is found in the cytoplasm. The catalysed reaction is L-prolyl-[protein] + 2-oxoglutarate + O2 = trans-4-hydroxy-L-prolyl-[protein] + succinate + CO2. The enzyme catalyses L-prolyl-[hypoxia-inducible factor alpha subunit] + 2-oxoglutarate + O2 = trans-4-hydroxy-L-prolyl-[hypoxia-inducible factor alpha subunit] + succinate + CO2. In terms of biological role, prolyl hydroxylase that mediates hydroxylation of proline residues in target proteins, such as PKM, TELO2, ATF4 and HIF1A. Target proteins are preferentially recognized via a LXXLAP motif. Cellular oxygen sensor that catalyzes, under normoxic conditions, the post-translational formation of 4-hydroxyproline in hypoxia-inducible factor (HIF) alpha proteins. Hydroxylates a specific proline found in each of the oxygen-dependent degradation (ODD) domains (N-terminal, NODD, and C-terminal, CODD) of HIF1A. Also hydroxylates HIF2A. Has a preference for the CODD site for both HIF1A and HIF2A. Hydroxylation on the NODD site by EGLN3 appears to require prior hydroxylation on the CODD site. Hydroxylated HIFs are then targeted for proteasomal degradation via the von Hippel-Lindau ubiquitination complex. Under hypoxic conditions, the hydroxylation reaction is attenuated allowing HIFs to escape degradation resulting in their translocation to the nucleus, heterodimerization with HIF1B, and increased expression of hypoxy-inducible genes. ELGN3 is the most important isozyme in limiting physiological activation of HIFs (particularly HIF2A) in hypoxia. Also hydroxylates PKM in hypoxia, limiting glycolysis. Under normoxia, hydroxylates and regulates the stability of ADRB2. Regulator of cardiomyocyte and neuronal apoptosis. In cardiomyocytes, inhibits the anti-apoptotic effect of BCL2 by disrupting the BAX-BCL2 complex. In neurons, has a NGF-induced proapoptotic effect, probably through regulating CASP3 activity. Also essential for hypoxic regulation of neutrophilic inflammation. Plays a crucial role in DNA damage response (DDR) by hydroxylating TELO2, promoting its interaction with ATR which is required for activation of the ATR/CHK1/p53 pathway. Also mediates hydroxylation of ATF4, leading to decreased protein stability of ATF4. The sequence is that of Prolyl hydroxylase EGLN3 from Mus musculus (Mouse).